Here is a 190-residue protein sequence, read N- to C-terminus: Bifunctional protein PyrR (190 aa).

Positions 112–124 (VILVDDVLYSGRS) match the PRPP-binding motif.

Belongs to the purine/pyrimidine phosphoribosyltransferase family. PyrR subfamily.

It catalyses the reaction UMP + diphosphate = 5-phospho-alpha-D-ribose 1-diphosphate + uracil. Regulates the transcription of the pyrimidine nucleotide (pyr) operon in response to exogenous pyrimidines. Its function is as follows. Also displays a weak uracil phosphoribosyltransferase activity which is not physiologically significant. In Mycolicibacterium paratuberculosis (strain ATCC BAA-968 / K-10) (Mycobacterium paratuberculosis), this protein is Bifunctional protein PyrR.